The sequence spans 326 residues: 4-hydroxy-3-methylbut-2-enyl diphosphate reductase (326 aa).

Cysteine 22 provides a ligand contact to [4Fe-4S] cluster. (2E)-4-hydroxy-3-methylbut-2-enyl diphosphate is bound by residues histidine 51 and histidine 84. Histidine 51 and histidine 84 together coordinate dimethylallyl diphosphate. Histidine 51 and histidine 84 together coordinate isopentenyl diphosphate. Cysteine 106 is a [4Fe-4S] cluster binding site. Histidine 134 is a binding site for (2E)-4-hydroxy-3-methylbut-2-enyl diphosphate. Histidine 134 contacts dimethylallyl diphosphate. Histidine 134 lines the isopentenyl diphosphate pocket. Residue glutamate 136 is the Proton donor of the active site. Threonine 174 serves as a coordination point for (2E)-4-hydroxy-3-methylbut-2-enyl diphosphate. Residue cysteine 204 coordinates [4Fe-4S] cluster. The (2E)-4-hydroxy-3-methylbut-2-enyl diphosphate site is built by serine 232, serine 233, asparagine 234, and serine 276. Dimethylallyl diphosphate-binding residues include serine 232, serine 233, asparagine 234, and serine 276. 4 residues coordinate isopentenyl diphosphate: serine 232, serine 233, asparagine 234, and serine 276.

This sequence belongs to the IspH family. [4Fe-4S] cluster is required as a cofactor.

The catalysed reaction is isopentenyl diphosphate + 2 oxidized [2Fe-2S]-[ferredoxin] + H2O = (2E)-4-hydroxy-3-methylbut-2-enyl diphosphate + 2 reduced [2Fe-2S]-[ferredoxin] + 2 H(+). It catalyses the reaction dimethylallyl diphosphate + 2 oxidized [2Fe-2S]-[ferredoxin] + H2O = (2E)-4-hydroxy-3-methylbut-2-enyl diphosphate + 2 reduced [2Fe-2S]-[ferredoxin] + 2 H(+). The protein operates within isoprenoid biosynthesis; dimethylallyl diphosphate biosynthesis; dimethylallyl diphosphate from (2E)-4-hydroxy-3-methylbutenyl diphosphate: step 1/1. It functions in the pathway isoprenoid biosynthesis; isopentenyl diphosphate biosynthesis via DXP pathway; isopentenyl diphosphate from 1-deoxy-D-xylulose 5-phosphate: step 6/6. In terms of biological role, catalyzes the conversion of 1-hydroxy-2-methyl-2-(E)-butenyl 4-diphosphate (HMBPP) into a mixture of isopentenyl diphosphate (IPP) and dimethylallyl diphosphate (DMAPP). Acts in the terminal step of the DOXP/MEP pathway for isoprenoid precursor biosynthesis. The polypeptide is 4-hydroxy-3-methylbut-2-enyl diphosphate reductase (Bordetella bronchiseptica (strain ATCC BAA-588 / NCTC 13252 / RB50) (Alcaligenes bronchisepticus)).